The following is a 266-amino-acid chain: 4-hydroxy-tetrahydrodipicolinate reductase (266 aa).

NAD(+) is bound by residues Gly-8 to Met-13 and Glu-33. Residue Arg-34 coordinates NADP(+). NAD(+) is bound by residues Gly-97–Thr-99 and Ala-121–Met-124. The Proton donor/acceptor role is filled by His-154. His-155 lines the (S)-2,3,4,5-tetrahydrodipicolinate pocket. Lys-158 (proton donor) is an active-site residue. Residue Gly-164–Thr-165 coordinates (S)-2,3,4,5-tetrahydrodipicolinate.

This sequence belongs to the DapB family.

The protein localises to the cytoplasm. The catalysed reaction is (S)-2,3,4,5-tetrahydrodipicolinate + NAD(+) + H2O = (2S,4S)-4-hydroxy-2,3,4,5-tetrahydrodipicolinate + NADH + H(+). The enzyme catalyses (S)-2,3,4,5-tetrahydrodipicolinate + NADP(+) + H2O = (2S,4S)-4-hydroxy-2,3,4,5-tetrahydrodipicolinate + NADPH + H(+). The protein operates within amino-acid biosynthesis; L-lysine biosynthesis via DAP pathway; (S)-tetrahydrodipicolinate from L-aspartate: step 4/4. Functionally, catalyzes the conversion of 4-hydroxy-tetrahydrodipicolinate (HTPA) to tetrahydrodipicolinate. In Geobacter sulfurreducens (strain ATCC 51573 / DSM 12127 / PCA), this protein is 4-hydroxy-tetrahydrodipicolinate reductase.